A 182-amino-acid polypeptide reads, in one-letter code: ADP-ribosylation factor-like protein 3 (182 aa).

G2 is lipidated: N-myristoyl glycine. A Phosphoserine modification is found at S5. GTP-binding positions include 24–31 (GLDNAGKT), T48, 67–71 (DIGGQ), G70, 126–129 (NKQD), and 159–161 (SAL). The Mg(2+) site is built by T31 and T48.

It belongs to the small GTPase superfamily. Arf family. In terms of assembly, found in a complex with ARL3, RP2 and UNC119 (or UNC119B); RP2 induces hydrolysis of GTP ARL3 in the complex, leading to the release of UNC119 (or UNC119B). Interacts with RP2; interaction is direct and stimulated with the activated GTP-bound form of ARL3. Interacts with SYS1. Interacts with ARL2BP; the GTP-bound form interacts with ARL2BP. Microtubule-associated protein. Does not interact with TBCC. Interacts with RP2. Interacts with PDE6D; the interaction occurs specifically with the GTP-bound form of ARL3. Interacts with GGA1; the interaction recruits PKD1:PKD2 complex to trans-Golgi network and is required for ciliary targeting of PKD1:PKD2 complex. Interacts with DNAAF9.

Its subcellular location is the golgi apparatus membrane. It localises to the cytoplasm. It is found in the cytoskeleton. The protein localises to the spindle. The protein resides in the nucleus. Its subcellular location is the microtubule organizing center. It localises to the centrosome. It is found in the cell projection. The protein localises to the cilium. Small GTP-binding protein which cycles between an inactive GDP-bound and an active GTP-bound form, and the rate of cycling is regulated by guanine nucleotide exchange factors (GEF) and GTPase-activating proteins (GAP). Required for normal cytokinesis and cilia signaling. Requires assistance from GTPase-activating proteins (GAPs) like RP2 and PDE6D, in order to cycle between inactive GDP-bound and active GTP-bound forms. Required for targeting proteins to the cilium, including myristoylated NPHP3 and prenylated INPP5E. Targets NPHP3 to the ciliary membrane by releasing myristoylated NPHP3 from UNC119B cargo adapter into the cilium. Required for PKD1:PKD2 complex targeting from the trans-Golgi network to the cilium. This is ADP-ribosylation factor-like protein 3 (Arl3) from Rattus norvegicus (Rat).